A 265-amino-acid polypeptide reads, in one-letter code: MNNCQLPLSDVQSRQDHRRLDIDKVGVKNIRYPIVVKDRSVGSQSTTARINMYVNLPHQFKGTHMSRFLEVLAENQRAISIENLPKLLKEVKQRLDAEEAHIELDFPYFITKKAPVSGVEALMDYQVHFSGVMRGNAYQLTLTVEVPVTSLCPCSKEISAYGAHNQRSHVKVSVQFSQFVWIEEVVDLVERNASCELFTILKRPDEKFVTEKAYDNPKFVEDMVRDLADELTHDPRISWFAVESENFESIHNHSAYAFIEGGQRS.

Belongs to the GTP cyclohydrolase IV family.

It carries out the reaction GTP + H2O = 7,8-dihydroneopterin 3'-triphosphate + formate + H(+). Its pathway is cofactor biosynthesis; 7,8-dihydroneopterin triphosphate biosynthesis; 7,8-dihydroneopterin triphosphate from GTP: step 1/1. In terms of biological role, converts GTP to 7,8-dihydroneopterin triphosphate. The polypeptide is GTP cyclohydrolase FolE2 (Magnetococcus marinus (strain ATCC BAA-1437 / JCM 17883 / MC-1)).